The following is a 55-amino-acid chain: Large ribosomal subunit protein bL33 (55 aa).

This sequence belongs to the bacterial ribosomal protein bL33 family.

The polypeptide is Large ribosomal subunit protein bL33 (Parvibaculum lavamentivorans (strain DS-1 / DSM 13023 / NCIMB 13966)).